The chain runs to 388 residues: MNLHEYQGKQLFAEYGLPVSTGFAVDTPEAAAEACDKIGGNEWVVKAQVHAGGRGKSGGVKLVRSKEDAKAFAQQWLGKRLVTYQTDANGQPVTKILVESCTDIAKELYLGAVVDRSSRRIVFMASTEGGVDIEKIAHDTPEKILKATIDPLVGAQPFQGRELAFQLGLEGKQVAQFAKIFVGLAKLFKDHDLALLEVNPLVIKADGDLHCLDAKINIDANAMYRQPKLKTFHDPSQDDPREAHAAKFELNYVALEGNIGCMVNGAGLAMGTMDIVNLHGGKPANFLDVGGGATKERVTEAFKIILSDSNVAAVLVNIFGGIVRCDMIAEGIIGAVKEVGVKIPVVVRLEGNNAELGAKVLAESGLNIIAATSLTDAAQQVVKAAEGK.

In terms of domain architecture, ATP-grasp spans 9-244 (KQLFAEYGLP…PSQDDPREAH (236 aa)). Residues K46, 53–55 (GRG), E99, T102, and E107 each bind ATP. Positions 199 and 213 each coordinate Mg(2+). Substrate contacts are provided by residues N264 and 321–323 (GIV).

This sequence belongs to the succinate/malate CoA ligase beta subunit family. Heterotetramer of two alpha and two beta subunits. The cofactor is Mg(2+).

It catalyses the reaction succinate + ATP + CoA = succinyl-CoA + ADP + phosphate. The enzyme catalyses GTP + succinate + CoA = succinyl-CoA + GDP + phosphate. Its pathway is carbohydrate metabolism; tricarboxylic acid cycle; succinate from succinyl-CoA (ligase route): step 1/1. Functionally, succinyl-CoA synthetase functions in the citric acid cycle (TCA), coupling the hydrolysis of succinyl-CoA to the synthesis of either ATP or GTP and thus represents the only step of substrate-level phosphorylation in the TCA. The beta subunit provides nucleotide specificity of the enzyme and binds the substrate succinate, while the binding sites for coenzyme A and phosphate are found in the alpha subunit. The chain is Succinate--CoA ligase [ADP-forming] subunit beta from Pseudomonas fluorescens (strain Pf0-1).